The chain runs to 357 residues: DNA replication and repair protein RecF (357 aa).

30-37 (GANGSGKT) is an ATP binding site.

It belongs to the RecF family.

The protein localises to the cytoplasm. Functionally, the RecF protein is involved in DNA metabolism; it is required for DNA replication and normal SOS inducibility. RecF binds preferentially to single-stranded, linear DNA. It also seems to bind ATP. The chain is DNA replication and repair protein RecF from Cronobacter sakazakii (strain ATCC BAA-894) (Enterobacter sakazakii).